We begin with the raw amino-acid sequence, 440 residues long: MFLAQEIIRKKRDGQALSDEEIRFFINGIRDNTISEGQIAALAMTIFFHDMSMPERVSLTMAMRDSGTVLDWKSLNLNGPIVDKHSTGGVGDVTSLMLGPMVAACGGYVPMISGRGLGHTGGTLDKLEAIPGFDIFPDDNRFREIIKDVGVAIIGQTSSLAPADKRFYATRDITATVDSIPLITASILAKKLAEGLDALVMDVKVGSGAFMPTYELSAALAEAIVGVANGAGVRTTALLTDMNQVLASSAGNAVEVREAVQFLTGEYRNPRLFDVTMALCVEMLISGKLAADDAEARAKLQAVLDNGKAAEVFGRMVAAQKGPSDFVENYANYLPTAMLSKAVYADTEGFISAMDTRALGMAVVSMGGGRRQASDTIDYSVGFTEMARLGDRVDGQRPLAVIHAKDENSWQEAAKAVKAAIKLDDKAPEITPTVYRRITE.

The protein belongs to the thymidine/pyrimidine-nucleoside phosphorylase family. In terms of assembly, homodimer.

The enzyme catalyses thymidine + phosphate = 2-deoxy-alpha-D-ribose 1-phosphate + thymine. It functions in the pathway pyrimidine metabolism; dTMP biosynthesis via salvage pathway; dTMP from thymine: step 1/2. In terms of biological role, the enzymes which catalyze the reversible phosphorolysis of pyrimidine nucleosides are involved in the degradation of these compounds and in their utilization as carbon and energy sources, or in the rescue of pyrimidine bases for nucleotide synthesis. In Klebsiella pneumoniae subsp. pneumoniae (strain ATCC 700721 / MGH 78578), this protein is Thymidine phosphorylase.